Here is a 427-residue protein sequence, read N- to C-terminus: Serine--tRNA ligase (427 aa).

231-233 (TAE) contacts L-serine. An ATP-binding site is contributed by 262–264 (RSE). Glu-285 contributes to the L-serine binding site. Residue 349–352 (EISS) coordinates ATP. Residue Ser-385 participates in L-serine binding.

Belongs to the class-II aminoacyl-tRNA synthetase family. Type-1 seryl-tRNA synthetase subfamily. Homodimer. The tRNA molecule binds across the dimer.

It is found in the cytoplasm. It catalyses the reaction tRNA(Ser) + L-serine + ATP = L-seryl-tRNA(Ser) + AMP + diphosphate + H(+). It carries out the reaction tRNA(Sec) + L-serine + ATP = L-seryl-tRNA(Sec) + AMP + diphosphate + H(+). It functions in the pathway aminoacyl-tRNA biosynthesis; selenocysteinyl-tRNA(Sec) biosynthesis; L-seryl-tRNA(Sec) from L-serine and tRNA(Sec): step 1/1. Catalyzes the attachment of serine to tRNA(Ser). Is also able to aminoacylate tRNA(Sec) with serine, to form the misacylated tRNA L-seryl-tRNA(Sec), which will be further converted into selenocysteinyl-tRNA(Sec). The polypeptide is Serine--tRNA ligase (Methylococcus capsulatus (strain ATCC 33009 / NCIMB 11132 / Bath)).